A 366-amino-acid chain; its full sequence is Succinyl-diaminopimelate desuccinylase (366 aa).

Histidine 66 contributes to the Zn(2+) binding site. The active site involves aspartate 68. Aspartate 97 is a Zn(2+) binding site. Glutamate 127 functions as the Proton acceptor in the catalytic mechanism. The Zn(2+) site is built by glutamate 128, glutamate 156, and histidine 341.

This sequence belongs to the peptidase M20A family. DapE subfamily. As to quaternary structure, homodimer. Zn(2+) serves as cofactor. It depends on Co(2+) as a cofactor.

The catalysed reaction is N-succinyl-(2S,6S)-2,6-diaminopimelate + H2O = (2S,6S)-2,6-diaminopimelate + succinate. Its pathway is amino-acid biosynthesis; L-lysine biosynthesis via DAP pathway; LL-2,6-diaminopimelate from (S)-tetrahydrodipicolinate (succinylase route): step 3/3. Functionally, catalyzes the hydrolysis of N-succinyl-L,L-diaminopimelic acid (SDAP), forming succinate and LL-2,6-diaminopimelate (DAP), an intermediate involved in the bacterial biosynthesis of lysine and meso-diaminopimelic acid, an essential component of bacterial cell walls. This is Succinyl-diaminopimelate desuccinylase from Aliarcobacter butzleri (strain RM4018) (Arcobacter butzleri).